The sequence spans 250 residues: MDKLFSMIEVEVNSQCNRTCWYCPNSVSKRKETGEMDPALYKTLMEQLSSLDFAGRISFHFYGEPLLCKNLDLFVGMTTEYIPRARPIIYTNGDFLTEKRLQTLTELGIQKFIVTQHAGAKHKFRGVYDQLAGADKEKVVYLDHSDLVLSNRGGILDNIPQASKANMSCMVPSNLAVVTVLGNVLPCFEDFNQKMVMGNIGEQHISDIWHNDKFTSFRKMLKEGHRGKSDLCKNCNNVSVQTEEQYDYVL.

Positions 16, 20, 23, 169, 187, and 223 each coordinate [4Fe-4S] cluster.

Belongs to the radical SAM superfamily. [4Fe-4S] cluster serves as cofactor.

The catalysed reaction is 2-deoxy-scyllo-inosamine + S-adenosyl-L-methionine = 3-amino-2,3-dideoxy-scyllo-inosose + 5'-deoxyadenosine + L-methionine + H(+). Its pathway is antibiotic biosynthesis; butirosin biosynthesis. Its function is as follows. Catalyzes the radical S-adenosyl-L-methionine (SAM)-dependent two-electron oxidation of 2-deoxy-scyllo-inosamine (DOIA) to amino-dideoxy-scyllo-inosose (amino-DOI) in the biosynthetic pathway of butirosin. The polypeptide is S-adenosyl-L-methionine-dependent 2-deoxy-scyllo-inosamine dehydrogenase (btrN) (Niallia circulans (Bacillus circulans)).